The following is a 117-amino-acid chain: Ribonuclease P protein component (117 aa).

The protein belongs to the RnpA family. As to quaternary structure, consists of a catalytic RNA component (M1 or rnpB) and a protein subunit.

The enzyme catalyses Endonucleolytic cleavage of RNA, removing 5'-extranucleotides from tRNA precursor.. Functionally, RNaseP catalyzes the removal of the 5'-leader sequence from pre-tRNA to produce the mature 5'-terminus. It can also cleave other RNA substrates such as 4.5S RNA. The protein component plays an auxiliary but essential role in vivo by binding to the 5'-leader sequence and broadening the substrate specificity of the ribozyme. The sequence is that of Ribonuclease P protein component from Aliivibrio fischeri (strain ATCC 700601 / ES114) (Vibrio fischeri).